Consider the following 543-residue polypeptide: Transmembrane protease serine 13 (543 aa).

Disordered regions lie at residues 1-96 (MDRG…TRVY) and 109-129 (RASP…PGLS). The Cytoplasmic portion of the chain corresponds to 1–143 (MDRGSHRNSS…SWQETQRQLP (143 aa)). Repeat copies occupy residues 14-17 (TPPQ) and 18-22 (ASPAR). The 4 X 4 AA repeats of T-P-P-Q stretch occupies residues 14–49 (TPPQASPARTSPARAPPQASPARTPPQASPARTPPQ). Positions 18–69 (ASPARTSPARAPPQASPARTPPQASPARTPPQASPARAPPPQASPARASPAR) are 8 X 5 AA repeats of A-S-P-A-R. A 2-2; approximate repeat occupies 23 to 27 (TSPAR). Over residues 27–60 (RAPPQASPARTPPQASPARTPPQASPARAPPPQA) the composition is skewed to pro residues. Residues 28 to 31 (APPQ) form a 1-2; approximate repeat. 5 consecutive repeat copies span residues 32–36 (ASPAR), 37–40 (TPPQ), 41–45 (ASPAR), 46–49 (TPPQ), and 50–54 (ASPAR). A 2-6; approximate repeat occupies 55 to 59 (APPPQ). 2 repeat units span residues 60 to 64 (ASPAR) and 65 to 69 (ASPAR). Composition is skewed to low complexity over residues 61–94 (SPAR…SPTR) and 109–120 (RASPARSAPATR). Residues 144–164 (LIGCVILLISLVISLILLFYF) traverse the membrane as a helical; Signal-anchor for type II membrane protein segment. The Extracellular portion of the chain corresponds to 165-543 (WRGHTGIKYK…MESEVRFRKS (379 aa)). Residues 180-202 (CPIHAVRCDGVVDCKMKSDELGC) form the LDL-receptor class A domain. An SRCR domain is found at 199 to 301 (ELGCVRFDWD…HCGLRAMTGR (103 aa)). 3 disulfides stabilise this stretch: C226/C290, C239/C293, and C327/C343. N231 and N268 each carry an N-linked (GlcNAc...) asparagine glycan. The 234-residue stretch at 302 to 535 (IVGGALTSES…VLPWIYRKME (234 aa)) folds into the Peptidase S1 domain. H342 (charge relay system) is an active-site residue. A glycan (N-linked (GlcNAc...) asparagine) is linked at N381. D390 acts as the Charge relay system in catalysis. N421 carries an N-linked (GlcNAc...) asparagine glycan. 3 cysteine pairs are disulfide-bonded: C424–C493, C456–C472, and C483–C511. S487 functions as the Charge relay system in the catalytic mechanism.

Belongs to the peptidase S1 family. In terms of assembly, interacts with SPINT1/HAI-1; the interaction promotes the phosphorylation and cell membrane localization of TMPRSS13. Interacts with SPINT2/HAI-2; the interaction promotes the phosphorylation and cell membrane localization of TMPRSS13. Post-translationally, the inactive zymogen is post-translationally modified and then trafficked to the cell surface, whereby it undergoes autocatalytic cleavage resulting in an activated form that is released extracellularly. In terms of processing, phosphorylation is required for localization at the cell surface. Phosphorylation increases following inhibition of protease activity by SPINT2/HAI-2. As to expression, expressed in the suprabasal squamous epithelium of the epidermis, hair follicles, oral epithelium, cornea, upper digestive tract, transitional epithelium of the bladder, prostate, heart, intestine, kidney and thymus.

The protein localises to the cell membrane. It localises to the secreted. The protein resides in the cytoplasm. Cleavage of HGF is inhibited by SPINT1/HAI-1 via the BPTI/Kunitz inhibitor 1 domain. Its function is as follows. Serine protease. Cleaves the proform of PRSS8/prostasin to form the active protein. Cleaves the proform of HGF to form the active protein which promotes MAPK signaling. Promotes the formation of the stratum corneum and subsequently the epidermal barrier in embryos. This chain is Transmembrane protease serine 13 (Tmprss13), found in Mus musculus (Mouse).